The chain runs to 122 residues: Large ribosomal subunit protein uL14 (122 aa).

The protein belongs to the universal ribosomal protein uL14 family. In terms of assembly, part of the 50S ribosomal subunit. Forms a cluster with proteins L3 and L19. In the 70S ribosome, L14 and L19 interact and together make contacts with the 16S rRNA in bridges B5 and B8.

Functionally, binds to 23S rRNA. Forms part of two intersubunit bridges in the 70S ribosome. In Shewanella baltica (strain OS223), this protein is Large ribosomal subunit protein uL14.